We begin with the raw amino-acid sequence, 469 residues long: Transcription factor SOX-10 (469 aa).

5 disordered regions span residues 1-70 (MAEE…DDDK), 163-203 (LRMQ…QGGA), 215-278 (LDHR…DFGN), 357-378 (AQVKTETAGPQGPSHYSDQPST), and 436-469 (RPLYTAISDPSPSGPQSHSPTHWEQPVYTTLSRP). Low complexity predominate over residues 23–32 (LSPGSAPSLG). Serine 24 bears the Phosphoserine mark. Gly residues predominate over residues 33-44 (PDGGGGGGGGSG). The segment at 65 to 105 (EADDDKFPVCIREAVSQVLSGYDWTLVPMPVRVNGASKSKP) is dimerization (DIM). The HMG box DNA-binding region spans 107-175 (VKRPMNAFMV…QHKKDHPDYK (69 aa)). 2 stretches are compositionally biased toward basic and acidic residues: residues 163–176 (LRMQHKKDHPDYKY) and 257–274 (ADPKRDGRSMGEGGKPHI). The interval 231–313 (PEHPSGQSHG…LPPNGHPGHV (83 aa)) is transactivation domain (TAM). A transactivation domain (TAC) region spans residues 356 to 469 (KAQVKTETAG…QPVYTTLSRP (114 aa)). The segment covering 443-469 (SDPSPSGPQSHSPTHWEQPVYTTLSRP) has biased composition (polar residues).

Monomer. Interacts with ARMCX3 at the mitochondrial outer membrane surface. Interacts with PAX3.

It is found in the cytoplasm. The protein resides in the nucleus. The protein localises to the mitochondrion outer membrane. In terms of biological role, transcription factor that plays a central role in developing and mature glia. Specifically activates expression of myelin genes, during oligodendrocyte (OL) maturation, such as DUSP15 and MYRF, thereby playing a central role in oligodendrocyte maturation and CNS myelination. Once induced, MYRF cooperates with SOX10 to implement the myelination program. Transcriptional activator of MITF, acting synergistically with PAX3. Transcriptional activator of MBP, via binding to the gene promoter. The protein is Transcription factor SOX-10 (SOX10) of Sus scrofa (Pig).